The sequence spans 288 residues: Urease accessory protein UreD (288 aa).

This sequence belongs to the UreD family. In terms of assembly, ureD, UreF and UreG form a complex that acts as a GTP-hydrolysis-dependent molecular chaperone, activating the urease apoprotein by helping to assemble the nickel containing metallocenter of UreC. The UreE protein probably delivers the nickel.

It is found in the cytoplasm. Its function is as follows. Required for maturation of urease via the functional incorporation of the urease nickel metallocenter. The chain is Urease accessory protein UreD from Dechloromonas aromatica (strain RCB).